The chain runs to 633 residues: General amino acid permease AGP1 (633 aa).

Over 1–124 the chain is Cytoplasmic; the sequence is MSSSKSLYEL…SLKKTIQPRH (124 aa). Ser6 carries the phosphoserine modification. Residue Lys11 forms a Glycyl lysine isopeptide (Lys-Gly) (interchain with G-Cter in ubiquitin) linkage. 2 disordered regions span residues 32–52 and 86–116; these read FETGSNDRPSSQPHLGYEQHN and ISPSSRQAQELEKNESSDNIGANTGHKSDSL. Residues 34 to 52 show a composition bias toward polar residues; the sequence is TGSNDRPSSQPHLGYEQHN. The chain crosses the membrane as a helical span at residues 125–145; that stretch reads VLMIALGTGIGTGLLVGNGTA. The Extracellular segment spans residues 146–148; the sequence is LVH. Residues 149-169 traverse the membrane as a helical segment; it reads AGPAGLLIGYAIMGSILYCII. The Cytoplasmic segment spans residues 170–197; the sequence is QACGEMALVYSNLTGGYNAYPSFLVDDG. The chain crosses the membrane as a helical span at residues 198–218; it reads FGFAVAWVYCLQWLCVCPLEL. The Extracellular portion of the chain corresponds to 219–231; sequence VTASMTIKYWTTS. Residues 232–252 form a helical membrane-spanning segment; sequence VNPDVFVIIFYVLVITINIFG. Over 253-260 the chain is Cytoplasmic; the sequence is ARGYAEAE. The helical transmembrane segment at 261–281 threads the bilayer; sequence FFFNCCKILMMTGFFILGIII. Over 282–313 the chain is Extracellular; the sequence is DVGGAGNDGFIGGKYWHDPGAFNGKHAIDRFK. A helical transmembrane segment spans residues 314–334; the sequence is GVAATLVTAAFAFGGSEFIAI. The Cytoplasmic portion of the chain corresponds to 335 to 352; that stretch reads TTAEQSNPRKAIPGAAKQ. Residues 353-373 form a helical membrane-spanning segment; the sequence is MIYRILFLFLATIILLGFLVP. Residues 374–402 are Extracellular-facing; sequence YNSDQLLGSTGGGTKASPYVIAVASHGVR. A helical transmembrane segment spans residues 403 to 425; the sequence is VVPHFINAVILLSVLSMANSSFY. Over 426-452 the chain is Cytoplasmic; it reads SSARLFLTLSEQGYAPKVFSYIDRAGR. The helical transmembrane segment at 453–473 threads the bilayer; sequence PLIAMGVSALFAVIAFCAASP. At 474-477 the chain is on the extracellular side; it reads KEEQ. A helical transmembrane segment spans residues 478 to 498; sequence VFTWLLAISGLSQLFTWTAIC. Over 499 to 531 the chain is Cytoplasmic; that stretch reads LSHLRFRRAMKVQGRSLGELGFKSQTGVWGSAY. Residues 532 to 552 form a helical membrane-spanning segment; it reads ACIMMILILIAQFWVAIAPIG. At 553-560 the chain is on the extracellular side; sequence EGKLDAQA. A helical membrane pass occupies residues 561–581; the sequence is FFENYLAMPILIALYVGYKVW. At 582-633 the chain is on the cytoplasmic side; the sequence is HKDWKLFIRADKIDLDSHRQIFDEELIKQEDEEYRERLRNGPYWKRVVAFWC. Residue Cys633 is the site of S-palmitoyl cysteine attachment.

Belongs to the amino acid-polyamine-organocation (APC) superfamily. YAT (TC 2.A.3.10) family. In terms of processing, palmitoylated by PFA4.

The protein localises to the cell membrane. Functionally, broad substrate range permease which transports asparagine and glutamine with intermediate specificity. Also transports Ala, Cys, Gly, Ile, Leu, Met, Phe, Ser, Thr, Tyr and Val. Important for the utilization of amino acids as a nitrogen source. The chain is General amino acid permease AGP1 (AGP1) from Saccharomyces cerevisiae (strain ATCC 204508 / S288c) (Baker's yeast).